The chain runs to 69 residues: Cell division protein CrgA (69 aa).

2 helical membrane-spanning segments follow: residues 14-34 and 45-65; these read VWFP…MVLF and AVGT…FAMM.

It belongs to the CrgA family.

It localises to the cell membrane. Involved in cell division. This chain is Cell division protein CrgA, found in Tropheryma whipplei (strain TW08/27) (Whipple's bacillus).